The primary structure comprises 131 residues: Small ribosomal subunit protein uS11 (131 aa).

Belongs to the universal ribosomal protein uS11 family. Part of the 30S ribosomal subunit. Interacts with proteins S7 and S18. Binds to IF-3.

Functionally, located on the platform of the 30S subunit, it bridges several disparate RNA helices of the 16S rRNA. Forms part of the Shine-Dalgarno cleft in the 70S ribosome. The polypeptide is Small ribosomal subunit protein uS11 (Deinococcus deserti (strain DSM 17065 / CIP 109153 / LMG 22923 / VCD115)).